Consider the following 700-residue polypeptide: Hedgehog-interacting protein (700 aa).

The N-terminal stretch at 1-17 (MLKMLSFKLLLLAVALG) is a signal peptide. Residue N99 is glycosylated (N-linked (GlcNAc...) asparagine). 11 disulfides stabilise this stretch: C216–C536, C218–C543, C402–C624, C435–C452, C500–C594, C608–C617, C612–C623, C625–C634, C639–C649, C643–C655, and C657–C666. Positions 376-388 (LDDMEEMDGLSDF) are interaction with SHH zinc binding site. Residue D383 participates in Zn(2+) binding. N416, N447, and N459 each carry an N-linked (GlcNAc...) asparagine glycan. EGF-like domains lie at 607-634 (ECSRLCRNGYCTPTGKCCCSPGWEGDFC) and 635-667 (RTAKCEPACRHGGVCVRPNKCLCKKGYLGPQCE).

Belongs to the HHIP family. Interacts with all three hedgehog family members, SHH, IHH and DHH. Widely expressed in fetal and adult tissues. Highest expression in adult heart, liver and pancreas, and in fetal kidney.

The protein resides in the cell membrane. It is found in the secreted. It localises to the cytoplasm. Modulates hedgehog signaling in several cell types including brain and lung through direct interaction with members of the hedgehog family. The sequence is that of Hedgehog-interacting protein (HHIP) from Homo sapiens (Human).